We begin with the raw amino-acid sequence, 200 residues long: Vacuolar iron transporter homolog 3 (200 aa).

The Cytoplasmic segment spans residues 1–31 (MESHNTLNLDMEKDQEKAFDYSKRAQWLRAA). The chain crosses the membrane as a helical span at residues 32–52 (VLGANDGLVSTASLMMGVGAV). The Vacuolar portion of the chain corresponds to 53-59 (KQNVKIM). The helical transmembrane segment at 60–80 (ILTGFAGLVAGACSMAIGEFV) threads the bilayer. Topologically, residues 81–113 (SVYSQYDIEVAQMKRETGGEIEKEKLPSPTQAA) are cytoplasmic. Residues 114–134 (AASALAFSLGAMVPLLAAAFV) traverse the membrane as a helical segment. Residues 135–140 (KEYKVR) are Vacuolar-facing. A helical transmembrane segment spans residues 141-161 (IGAIVAAVTLALVMFGWLGAV). Topologically, residues 162-173 (LGKAPVVKSSLR) are cytoplasmic. Residues 174-194 (VLVGGWLAMAITYGFTKLIGS) traverse the membrane as a helical segment. Topologically, residues 195–200 (HSHMYV) are vacuolar.

This sequence belongs to the CCC1 family.

It localises to the vacuole membrane. It catalyses the reaction Fe(2+)(in) = Fe(2+)(out). In terms of biological role, probable vacuolar iron transporter that may be involved in the regulation of iron distribution throughout the plant. The chain is Vacuolar iron transporter homolog 3 from Arabidopsis thaliana (Mouse-ear cress).